A 482-amino-acid polypeptide reads, in one-letter code: Serine decarboxylase 1 (482 aa).

Positions 36 to 55 are disordered; it reads EVESPPRPAEEEGEGSPTRR. Position 200 (His200) interacts with substrate. Lys312 carries the post-translational modification N6-(pyridoxal phosphate)lysine.

It belongs to the group II decarboxylase family. It depends on pyridoxal 5'-phosphate as a cofactor.

It carries out the reaction L-serine + H(+) = ethanolamine + CO2. Functionally, catalyzes the biosynthesis of ethanolamine from serine. Decarboxylation of free serine is the major source of ethanolamine production in plants and ethanolamine metabolism is crucial for the synthesis of choline, phosphatidylethanolamine (PE) and phosphatidylcholine (PC), and thus for plant growth. The chain is Serine decarboxylase 1 (SDC1) from Oryza sativa subsp. japonica (Rice).